We begin with the raw amino-acid sequence, 317 residues long: CXXC-type zinc finger protein 5 (317 aa).

Over residues 1-10 (MSSLGGGSQD) the composition is skewed to gly residues. The tract at residues 1-92 (MSSLGGGSQD…SFGSSGGGGS (92 aa)) is disordered. Low complexity-rich tracts occupy residues 11–27 (AGGS…SGSG) and 36–51 (STAV…VADD). The CXXC-type zinc-finger motif lies at 251–292 (GKKKRKRCGMCAPCRRRINCEQCSSCRNRKTGHQICKFRKCE). Positions 252-257 (KKKRKR) match the Nuclear localization signal motif. Zn(2+)-binding residues include C258, C261, C264, C270, C273, C276, C286, and C291.

Interacts with DVL1. Interacts with RBPJ.

Its subcellular location is the nucleus. It is found in the cytoplasm. In terms of biological role, may indirectly participate in activation of the NF-kappa-B and MAPK pathways. Acts as a mediator of BMP4-mediated modulation of canonical Wnt signaling activity in neural stem cells. Required for DNA damage-induced ATM phosphorylation, p53 activation and cell cycle arrest. Involved in myelopoiesis. Binds to the oxygen responsive element of COX4I2 and represses its transcription under hypoxia conditions (4% oxygen), as well as normoxia conditions (20% oxygen). May repress COX4I2 transactivation induced by CHCHD2 and RBPJ. Binds preferentially to DNA containing cytidine-phosphate-guanosine (CpG) dinucleotides over CpH (H=A, T, and C), hemimethylated-CpG and hemimethylated-hydroxymethyl-CpG. The sequence is that of CXXC-type zinc finger protein 5 (Cxxc5) from Mus musculus (Mouse).